We begin with the raw amino-acid sequence, 367 residues long: MRHFDSMEILNELLKFQSITPDDDGAFNYISMILNDFEEINIDKNGVKNVIFRKTFGPGVHICFAGHIDVVKPGIGWDSDPFDPLQKDGFIYARGAQDMKSAVASMICAVSGVQNFNGTISLLLTSDEEGDAVFGTREALKFLQSRGELPDFAVVGEPTCETVFGDTIKVGRRGSINGILRINGIQGHVAYPNKCVNPVHILASKFANFAGHDFDNGNDFFEPSKLVVVDIRGGMQVCNVTPSDVSVMFNVRNSNLTDANDIKNFINDLYKDCDFDLNLKVSSNPFLTDKNSKIVQKLSQSVQKISGVCPVFTTGGGTSDARYFAEFNVDVAEFGVINDRLHAVNERVSVNEVQKLTEIYKDLIENF.

Zn(2+) is bound at residue H67. The active site involves D69. A Zn(2+)-binding site is contributed by D98. Catalysis depends on E128, which acts as the Proton acceptor. Positions 129, 157, and 342 each coordinate Zn(2+).

This sequence belongs to the peptidase M20A family. DapE subfamily. As to quaternary structure, homodimer. Zn(2+) is required as a cofactor. The cofactor is Co(2+).

The enzyme catalyses N-succinyl-(2S,6S)-2,6-diaminopimelate + H2O = (2S,6S)-2,6-diaminopimelate + succinate. The protein operates within amino-acid biosynthesis; L-lysine biosynthesis via DAP pathway; LL-2,6-diaminopimelate from (S)-tetrahydrodipicolinate (succinylase route): step 3/3. Functionally, catalyzes the hydrolysis of N-succinyl-L,L-diaminopimelic acid (SDAP), forming succinate and LL-2,6-diaminopimelate (DAP), an intermediate involved in the bacterial biosynthesis of lysine and meso-diaminopimelic acid, an essential component of bacterial cell walls. This Campylobacter hominis (strain ATCC BAA-381 / DSM 21671 / CCUG 45161 / LMG 19568 / NCTC 13146 / CH001A) protein is Succinyl-diaminopimelate desuccinylase.